The sequence spans 236 residues: Biosynthetic peptidoglycan transglycosylase (236 aa).

Residues 12 to 31 (ALLWFVAGSIVLVLVFRWVP) traverse the membrane as a helical segment.

Belongs to the glycosyltransferase 51 family.

The protein resides in the cell inner membrane. It catalyses the reaction [GlcNAc-(1-&gt;4)-Mur2Ac(oyl-L-Ala-gamma-D-Glu-L-Lys-D-Ala-D-Ala)](n)-di-trans,octa-cis-undecaprenyl diphosphate + beta-D-GlcNAc-(1-&gt;4)-Mur2Ac(oyl-L-Ala-gamma-D-Glu-L-Lys-D-Ala-D-Ala)-di-trans,octa-cis-undecaprenyl diphosphate = [GlcNAc-(1-&gt;4)-Mur2Ac(oyl-L-Ala-gamma-D-Glu-L-Lys-D-Ala-D-Ala)](n+1)-di-trans,octa-cis-undecaprenyl diphosphate + di-trans,octa-cis-undecaprenyl diphosphate + H(+). Its pathway is cell wall biogenesis; peptidoglycan biosynthesis. Functionally, peptidoglycan polymerase that catalyzes glycan chain elongation from lipid-linked precursors. The sequence is that of Biosynthetic peptidoglycan transglycosylase from Pseudomonas putida (strain ATCC 700007 / DSM 6899 / JCM 31910 / BCRC 17059 / LMG 24140 / F1).